The following is a 599-amino-acid chain: Transcription factor COE4 (599 aa).

The interaction with DNA stretch occupies residues 64–67; that stretch reads RKSN. Residues 152 to 171 form a C5-type zinc finger; the sequence is CRVLLTHEIMCSRCCDRKSC. Interaction with DNA stretches follow at residues 198 to 205 and 237 to 240; these read NCLKNAGN and NNSK. Residues 256–339 form the IPT/TIG domain; sequence PCIKAISPGE…KGAPGRFVYT (84 aa). 2 disordered regions span residues 449 to 473 and 556 to 586; these read GYAR…SSYG and VLRP…TDKF. The span at 464-473 shows a compositional bias: low complexity; that stretch reads SPGSQQSSYG.

The protein belongs to the COE family. As to quaternary structure, forms either a homodimer or a heterodimer with a related family member. In terms of tissue distribution, expressed in the olfactory epithelium, including in both neuronal and basal cell layers. Absent in the vomeronasal organ. Absent from NK cells and CD8(+) T cells.

Its subcellular location is the nucleus. Its function is as follows. Transcription factor. Positively modulates transcription, perhaps less strongly than other early B cell factor/EBF family proteins. Binds an EBF1/Olf-1 consensus site in vitro. This is Transcription factor COE4 (Ebf4) from Mus musculus (Mouse).